Reading from the N-terminus, the 475-residue chain is Ribulose bisphosphate carboxylase large chain (475 aa).

Positions 1–2 (MS) are excised as a propeptide. Pro3 carries the N-acetylproline modification. Lys14 bears the N6,N6,N6-trimethyllysine mark. Asn123 and Thr173 together coordinate substrate. The active-site Proton acceptor is the Lys175. Lys177 lines the substrate pocket. The Mg(2+) site is built by Lys201, Asp203, and Glu204. Lys201 is subject to N6-carboxylysine. His294 serves as the catalytic Proton acceptor. 3 residues coordinate substrate: Arg295, His327, and Ser379.

This sequence belongs to the RuBisCO large chain family. Type I subfamily. In terms of assembly, heterohexadecamer of 8 large chains and 8 small chains; disulfide-linked. The disulfide link is formed within the large subunit homodimers. It depends on Mg(2+) as a cofactor. The disulfide bond which can form in the large chain dimeric partners within the hexadecamer appears to be associated with oxidative stress and protein turnover.

It localises to the plastid. The protein localises to the chloroplast. It carries out the reaction 2 (2R)-3-phosphoglycerate + 2 H(+) = D-ribulose 1,5-bisphosphate + CO2 + H2O. It catalyses the reaction D-ribulose 1,5-bisphosphate + O2 = 2-phosphoglycolate + (2R)-3-phosphoglycerate + 2 H(+). Its function is as follows. RuBisCO catalyzes two reactions: the carboxylation of D-ribulose 1,5-bisphosphate, the primary event in carbon dioxide fixation, as well as the oxidative fragmentation of the pentose substrate in the photorespiration process. Both reactions occur simultaneously and in competition at the same active site. The sequence is that of Ribulose bisphosphate carboxylase large chain from Afrocarpus gracilior (African fern pine).